The following is a 431-amino-acid chain: 23S rRNA (uracil(1939)-C(5))-methyltransferase RlmD (431 aa).

The 59-residue stretch at 10–68 folds into the TRAM domain; sequence RVTTRQIITVKVNDLDSFGQGVARHNGKALFIPGLLPEESAEVIITEDKKQFARARVSR. 4 residues coordinate [4Fe-4S] cluster: Cys-81, Cys-87, Cys-90, and Cys-161. Residues Gln-264, Phe-293, Asn-298, Glu-314, Asn-341, and Asp-362 each coordinate S-adenosyl-L-methionine. Cys-388 functions as the Nucleophile in the catalytic mechanism.

This sequence belongs to the class I-like SAM-binding methyltransferase superfamily. RNA M5U methyltransferase family. RlmD subfamily.

The enzyme catalyses uridine(1939) in 23S rRNA + S-adenosyl-L-methionine = 5-methyluridine(1939) in 23S rRNA + S-adenosyl-L-homocysteine + H(+). Functionally, catalyzes the formation of 5-methyl-uridine at position 1939 (m5U1939) in 23S rRNA. The chain is 23S rRNA (uracil(1939)-C(5))-methyltransferase RlmD from Salmonella choleraesuis (strain SC-B67).